The primary structure comprises 30 residues: Cytochrome b6/f complex 12.6 kDa peptide (30 aa).

The disordered stretch occupies residues 1 to 30 (SGSGVRSAKKGGKAQGGQAGVGYKGSTEPG). The span at 13-23 (KAQGGQAGVGY) shows a compositional bias: gly residues.

Its subcellular location is the plastid. The protein resides in the chloroplast. In terms of biological role, may be a component of the cytochrome b6/f complex which is part of the photosynthetic respiratory chain. This Euglena gracilis protein is Cytochrome b6/f complex 12.6 kDa peptide.